The sequence spans 152 residues: FMN reductase (NADH) RutF (152 aa).

The protein belongs to the non-flavoprotein flavin reductase family. RutF subfamily.

It catalyses the reaction FMNH2 + NAD(+) = FMN + NADH + 2 H(+). Catalyzes the reduction of FMN to FMNH2 which is used to reduce pyrimidine by RutA via the Rut pathway. In Shigella flexneri, this protein is FMN reductase (NADH) RutF.